We begin with the raw amino-acid sequence, 109 residues long: Large ribosomal subunit protein uL22 (109 aa).

The protein belongs to the universal ribosomal protein uL22 family. Part of the 50S ribosomal subunit.

This protein binds specifically to 23S rRNA; its binding is stimulated by other ribosomal proteins, e.g. L4, L17, and L20. It is important during the early stages of 50S assembly. It makes multiple contacts with different domains of the 23S rRNA in the assembled 50S subunit and ribosome. In terms of biological role, the globular domain of the protein is located near the polypeptide exit tunnel on the outside of the subunit, while an extended beta-hairpin is found that lines the wall of the exit tunnel in the center of the 70S ribosome. The polypeptide is Large ribosomal subunit protein uL22 (Wolinella succinogenes (strain ATCC 29543 / DSM 1740 / CCUG 13145 / JCM 31913 / LMG 7466 / NCTC 11488 / FDC 602W) (Vibrio succinogenes)).